A 351-amino-acid polypeptide reads, in one-letter code: Biotin synthase (351 aa).

One can recognise a Radical SAM core domain in the interval 44 to 262 (NRVQVSTLLS…LAVARILMPQ (219 aa)). The [4Fe-4S] cluster site is built by Cys59, Cys63, and Cys66. 4 residues coordinate [2Fe-2S] cluster: Cys103, Cys134, Cys194, and Arg266.

The protein belongs to the radical SAM superfamily. Biotin synthase family. Homodimer. [4Fe-4S] cluster is required as a cofactor. Requires [2Fe-2S] cluster as cofactor.

It catalyses the reaction (4R,5S)-dethiobiotin + (sulfur carrier)-SH + 2 reduced [2Fe-2S]-[ferredoxin] + 2 S-adenosyl-L-methionine = (sulfur carrier)-H + biotin + 2 5'-deoxyadenosine + 2 L-methionine + 2 oxidized [2Fe-2S]-[ferredoxin]. It participates in cofactor biosynthesis; biotin biosynthesis; biotin from 7,8-diaminononanoate: step 2/2. Its function is as follows. Catalyzes the conversion of dethiobiotin (DTB) to biotin by the insertion of a sulfur atom into dethiobiotin via a radical-based mechanism. The sequence is that of Biotin synthase from Pseudomonas fluorescens (strain ATCC BAA-477 / NRRL B-23932 / Pf-5).